Here is a 740-residue protein sequence, read N- to C-terminus: Polyribonucleotide nucleotidyltransferase (740 aa).

2 residues coordinate Mg(2+): Asp-496 and Asp-502. One can recognise a KH domain in the interval 563–622; the sequence is PAIIRTSIHPDKIRDIIGPGGKIIKKLVEETGADIDIEDDGRVFIAAVDREKGKRALEII. An S1 motif domain is found at 632-706; sequence GKLYNGKVTR…QQGRLKLSKK (75 aa). A disordered region spans residues 707-740; that stretch reads EAMRDMGLAPAESTSEQPEKRERRPFSRPKATKE. Positions 723-740 are enriched in basic and acidic residues; that stretch reads QPEKRERRPFSRPKATKE.

Belongs to the polyribonucleotide nucleotidyltransferase family. Mg(2+) is required as a cofactor.

Its subcellular location is the cytoplasm. It carries out the reaction RNA(n+1) + phosphate = RNA(n) + a ribonucleoside 5'-diphosphate. Functionally, involved in mRNA degradation. Catalyzes the phosphorolysis of single-stranded polyribonucleotides processively in the 3'- to 5'-direction. The chain is Polyribonucleotide nucleotidyltransferase from Desulforamulus reducens (strain ATCC BAA-1160 / DSM 100696 / MI-1) (Desulfotomaculum reducens).